The primary structure comprises 798 residues: Phenylalanine--tRNA ligase beta subunit (798 aa).

The 111-residue stretch at 38–148 (IGNYEKVVVG…PEAPVGEKIE (111 aa)) folds into the tRNA-binding domain. The 76-residue stretch at 400–475 (FTPKVIAVSL…RYLGYNNFPD (76 aa)) folds into the B5 domain. Positions 453, 459, 462, and 463 each coordinate Mg(2+). The FDX-ACB domain occupies 703-796 (SPYPEVKRDI…LEAKTGAKLR (94 aa)).

It belongs to the phenylalanyl-tRNA synthetase beta subunit family. Type 1 subfamily. Tetramer of two alpha and two beta subunits. Mg(2+) is required as a cofactor.

The protein localises to the cytoplasm. It carries out the reaction tRNA(Phe) + L-phenylalanine + ATP = L-phenylalanyl-tRNA(Phe) + AMP + diphosphate + H(+). The sequence is that of Phenylalanine--tRNA ligase beta subunit from Carboxydothermus hydrogenoformans (strain ATCC BAA-161 / DSM 6008 / Z-2901).